Reading from the N-terminus, the 128-residue chain is Sulfurtransferase TusD (128 aa).

Residue Cys78 is the Cysteine persulfide intermediate of the active site.

The protein belongs to the DsrE/TusD family. In terms of assembly, heterohexamer, formed by a dimer of trimers. The hexameric TusBCD complex contains 2 copies each of TusB, TusC and TusD. The TusBCD complex interacts with TusE.

It localises to the cytoplasm. Functionally, part of a sulfur-relay system required for 2-thiolation of 5-methylaminomethyl-2-thiouridine (mnm(5)s(2)U) at tRNA wobble positions. Accepts sulfur from TusA and transfers it in turn to TusE. In Escherichia coli O139:H28 (strain E24377A / ETEC), this protein is Sulfurtransferase TusD.